We begin with the raw amino-acid sequence, 527 residues long: V-set and immunoglobulin domain-containing protein 10 (527 aa).

The first 13 residues, 1-13 (MWTRRWIQFLVLC), serve as a signal peptide directing secretion. Ig-like C2-type domains lie at 14–111 (LHLW…LKVS), 123–212 (PTRT…RQLL), 216–306 (PPIT…CQIQ), and 310–399 (PLLE…KEIN). Residues 23-409 (YLGVFRGDVN…VWLTVNKPHN (387 aa)) lie on the Extracellular side of the membrane. N-linked (GlcNAc...) asparagine glycans are attached at residues Asn32, Asn41, Asn52, Asn64, Asn74, Asn90, Asn129, Asn139, Asn191, Asn206, Asn226, Asn260, Asn276, Asn325, Asn346, and Asn375. An intrachain disulfide couples Cys144 to Cys194. A disulfide bridge links Cys238 with Cys288. An intrachain disulfide couples Cys330 to Cys387. Residues 410–430 (IVGLVTALLLLFLLVVAIITG) traverse the membrane as a helical segment. The Cytoplasmic segment spans residues 431-527 (TVLYCDPQIY…TGEENQNEEI (97 aa)). Residues 501–527 (RPPESTSSDLFSEVSDDTGEENQNEEI) are disordered. Positions 514 to 527 (VSDDTGEENQNEEI) are enriched in acidic residues.

It localises to the membrane. This Xenopus laevis (African clawed frog) protein is V-set and immunoglobulin domain-containing protein 10 (vsig10).